The sequence spans 134 residues: Large-conductance mechanosensitive channel (134 aa).

2 helical membrane-spanning segments follow: residues 15–35 (IDLA…QSVV) and 80–100 (GNFI…FLAV).

The protein belongs to the MscL family. In terms of assembly, homopentamer.

The protein localises to the cell inner membrane. Functionally, channel that opens in response to stretch forces in the membrane lipid bilayer. May participate in the regulation of osmotic pressure changes within the cell. The sequence is that of Large-conductance mechanosensitive channel from Methylocella silvestris (strain DSM 15510 / CIP 108128 / LMG 27833 / NCIMB 13906 / BL2).